A 652-amino-acid chain; its full sequence is Leucine-rich repeat-containing protein 4 (652 aa).

An N-terminal signal peptide occupies residues 1–40 (MKLLWQVTVHHTWNAVLLPVVYLTAQVWILCAAIAAAASA). The Extracellular portion of the chain corresponds to 1-526 (MKLLWQVTVH…SLDEVMKTTK (526 aa)). The LRRNT domain occupies 41–74 (GPQNCPSVCSCSNQFSKVVCTRRGLSEVPQGIPS). 2 disulfide bridges follow: Cys-45-Cys-51 and Cys-49-Cys-60. LRR repeat units follow at residues 75–96 (NTRY…TFRH), 99–120 (HLEV…AFNG), 123–144 (SLNT…AFEY), 147–168 (KLRE…AFNR), 171–193 (SLMR…AFEG), 196–217 (NLKY…TPLV), 218–239 (GLEE…SFHG), 242–263 (SLKK…AFDG), and 266–287 (SLVE…LFTP). Positions 299-351 (NPWNCDCDILWLAWWLREYIPTNSTCCGRCHAPMHMRGRYLVEVDQASFQCSA) constitute an LRRCT domain. 2 cysteine pairs are disulfide-bonded: Cys-303-Cys-328 and Cys-305-Cys-349. Asn-321 and Asn-362 each carry an N-linked (GlcNAc...) asparagine glycan. The Ig-like C2-type domain maps to 352-441 (PFIMDAPRDL…SNASAYLNVS (90 aa)). Cysteines 373 and 423 form a disulfide. Residues 527–547 (IIIGCFVAVTLLAAAMLIVFY) traverse the membrane as a helical segment. The Cytoplasmic segment spans residues 548–652 (KLRKRHQQRS…TKDKVQETQI (105 aa)).

Interacts (via LRR repeats) with NTNG2. Interacts with DLG4. Found in a complex with NMDA receptors. In terms of processing, N-glycosylated. In terms of tissue distribution, mainly expressed in the brain. Expression is concentrated in the olfactory bulb, cortex, hippocampus and cerebellum in adult brain. Detected both embryonically and postnatally with stronger expression in postnatal stages.

It localises to the membrane. Its subcellular location is the postsynaptic cell membrane. In terms of biological role, synaptic adhesion protein. Regulates the formation of exitatory synapses through the recruitment of pre-and-postsynaptic proteins. Organize the lamina/pathway-specific differentiation of dendrites. Plays an important role for auditory synaptic responses. Involved in the suppression of glioma. The polypeptide is Leucine-rich repeat-containing protein 4 (Lrrc4) (Rattus norvegicus (Rat)).